Reading from the N-terminus, the 436-residue chain is Phosphatidylinositol transfer protein CSR1 (436 aa).

Positions 85 to 104 (VYDAEKVEDSDAEKEKPTPQ) are disordered. A compositionally biased stretch (basic and acidic residues) spans 86–102 (YDAEKVEDSDAEKEKPT). The 160-residue stretch at 188–347 (KKGIVKQLEL…ELGGKDEYNF (160 aa)) folds into the CRAL-TRIO domain.

It belongs to the PITP family. As to quaternary structure, binds phosphatidylinositol (PtdIns).

It is found in the cytoplasm. Its subcellular location is the endosome. In terms of biological role, non-classical phosphatidylinositol (PtdIns) transfer protein (PITP), which exhibits PtdIns-binding/transfer activity in the absence of detectable PtdCho-binding/transfer activity. May also regulate post-Golgi membrane-trafficking events and have a role resistance to oxidative stress. The sequence is that of Phosphatidylinositol transfer protein CSR1 (CSR1) from Eremothecium gossypii (strain ATCC 10895 / CBS 109.51 / FGSC 9923 / NRRL Y-1056) (Yeast).